The sequence spans 216 residues: MRDQFISLALILCVLHSACGLYFHISETERKCFIEEVPDETTVIVNYKVELYDPRSNGFMPSSPGIGMHVEVRDSDDKIVLSRVYSSQGRISFTSHTPGEHVICMFSNSTAWFSGAQLRVHLDIQVGEHAIDYANVAQKEKLTELQLRIRQLLDQVEQITKEQNYQRYREERFRHTSESTNSRVLWWSLAQTIVLVCMGFWQMRHLKSFFEAKKLV.

Residues Met1–Gly20 form the signal peptide. Residues Leu21–Ser182 lie on the Lumenal side of the membrane. Residues Arg30 to Val126 enclose the GOLD domain. Residues Ala134 to Asn164 are a coiled coil. A helical transmembrane segment spans residues Arg183–Met203. Over Arg204 to Val216 the chain is Cytoplasmic. The Prevents secretion from ER signature appears at Lys213–Val216.

The protein belongs to the EMP24/GP25L family.

The protein resides in the endoplasmic reticulum membrane. Functionally, eca and bai are essential, though not redundant, for dorsoventral patterning of the embryo. Specifically required during early embryogenesis for the activity of maternal tkv, while the zygotic tkv is not affected. Involved in Golgi organization. The sequence is that of Transmembrane emp24 domain-containing protein eca from Drosophila sechellia (Fruit fly).